The sequence spans 943 residues: Isoleucine--tRNA ligase (943 aa).

The 'HIGH' region motif lies at proline 58–histidine 68. Glutamate 567 lines the L-isoleucyl-5'-AMP pocket. Positions lysine 608–serine 612 match the 'KMSKS' region motif. Lysine 611 contributes to the ATP binding site. Cysteine 906, cysteine 909, cysteine 926, and cysteine 929 together coordinate Zn(2+).

Belongs to the class-I aminoacyl-tRNA synthetase family. IleS type 1 subfamily. As to quaternary structure, monomer. Zn(2+) serves as cofactor.

Its subcellular location is the cytoplasm. The enzyme catalyses tRNA(Ile) + L-isoleucine + ATP = L-isoleucyl-tRNA(Ile) + AMP + diphosphate. Its function is as follows. Catalyzes the attachment of isoleucine to tRNA(Ile). As IleRS can inadvertently accommodate and process structurally similar amino acids such as valine, to avoid such errors it has two additional distinct tRNA(Ile)-dependent editing activities. One activity is designated as 'pretransfer' editing and involves the hydrolysis of activated Val-AMP. The other activity is designated 'posttransfer' editing and involves deacylation of mischarged Val-tRNA(Ile). The polypeptide is Isoleucine--tRNA ligase (Pseudomonas paraeruginosa (strain DSM 24068 / PA7) (Pseudomonas aeruginosa (strain PA7))).